The primary structure comprises 504 residues: Glycerol kinase (504 aa).

Residue threonine 12 participates in ADP binding. 3 residues coordinate ATP: threonine 12, threonine 13, and serine 14. Position 12 (threonine 12) interacts with sn-glycerol 3-phosphate. ADP is bound at residue arginine 16. Arginine 82, glutamate 83, tyrosine 134, and aspartate 246 together coordinate sn-glycerol 3-phosphate. Residues arginine 82, glutamate 83, tyrosine 134, aspartate 246, and glutamine 247 each contribute to the glycerol site. Residues threonine 268 and glycine 312 each coordinate ADP. Residues threonine 268, glycine 312, glutamine 316, and glycine 413 each contribute to the ATP site. Residues glycine 413 and asparagine 417 each contribute to the ADP site.

It belongs to the FGGY kinase family.

The catalysed reaction is glycerol + ATP = sn-glycerol 3-phosphate + ADP + H(+). It functions in the pathway polyol metabolism; glycerol degradation via glycerol kinase pathway; sn-glycerol 3-phosphate from glycerol: step 1/1. Inhibited by fructose 1,6-bisphosphate (FBP). Key enzyme in the regulation of glycerol uptake and metabolism. Catalyzes the phosphorylation of glycerol to yield sn-glycerol 3-phosphate. In Pseudarthrobacter chlorophenolicus (strain ATCC 700700 / DSM 12829 / CIP 107037 / JCM 12360 / KCTC 9906 / NCIMB 13794 / A6) (Arthrobacter chlorophenolicus), this protein is Glycerol kinase.